A 373-amino-acid polypeptide reads, in one-letter code: MLIIIRPSGEIALKSPRSRRNFEHTLANNIRSVIKEGKIWRSQGVLFLEVNDDNKNIEELSKVFGIASFSPVMSIKSYNNNLEDIINKAKEVFAEIVKGKIFSVRAKRIGSHNFTSLDVQRKVGEALYPFSRGVNLENPEVEVFIEIRNDVAYFYHKIIKGPKGLPVGVAGKTVVLFSGGIDSPVATWMMMKRGSIPVILNFNLGGSVHRKFVLEELSVLRKWSGGHKLKLFIVNGTDVLIKLSQIEKRNRVVMLKRVMYKVAERLCDKANVKSITTGESLSQVSSQTMTNLYVTEYGIKYPIFRPLIGFDKEEIVELARKIGTYEYSIKLPEYCAISTKARTSVELDEVLKDEENLNIDYEKVLENSEVIEI.

The THUMP domain occupies 54 to 158 (NKNIEELSKV…NDVAYFYHKI (105 aa)). ATP is bound by residues 176 to 177 (LF), 201 to 202 (NF), Lys-256, Gly-278, and Gln-287.

Belongs to the ThiI family.

It is found in the cytoplasm. The catalysed reaction is [ThiI sulfur-carrier protein]-S-sulfanyl-L-cysteine + a uridine in tRNA + 2 reduced [2Fe-2S]-[ferredoxin] + ATP + H(+) = [ThiI sulfur-carrier protein]-L-cysteine + a 4-thiouridine in tRNA + 2 oxidized [2Fe-2S]-[ferredoxin] + AMP + diphosphate. The enzyme catalyses [ThiS sulfur-carrier protein]-C-terminal Gly-Gly-AMP + S-sulfanyl-L-cysteinyl-[cysteine desulfurase] + AH2 = [ThiS sulfur-carrier protein]-C-terminal-Gly-aminoethanethioate + L-cysteinyl-[cysteine desulfurase] + A + AMP + 2 H(+). Its pathway is cofactor biosynthesis; thiamine diphosphate biosynthesis. Its function is as follows. Catalyzes the ATP-dependent transfer of a sulfur to tRNA to produce 4-thiouridine in position 8 of tRNAs, which functions as a near-UV photosensor. Also catalyzes the transfer of sulfur to the sulfur carrier protein ThiS, forming ThiS-thiocarboxylate. This is a step in the synthesis of thiazole, in the thiamine biosynthesis pathway. The sulfur is donated as persulfide by IscS. This chain is Probable tRNA sulfurtransferase, found in Saccharolobus islandicus (strain M.16.27) (Sulfolobus islandicus).